Reading from the N-terminus, the 194-residue chain is Thymidylate kinase (194 aa).

7 to 14 (GIDTAGKS) provides a ligand contact to ATP.

Belongs to the thymidylate kinase family.

It carries out the reaction dTMP + ATP = dTDP + ADP. In terms of biological role, phosphorylation of dTMP to form dTDP in both de novo and salvage pathways of dTTP synthesis. This Nautilia profundicola (strain ATCC BAA-1463 / DSM 18972 / AmH) protein is Thymidylate kinase.